A 342-amino-acid polypeptide reads, in one-letter code: Phosphoribosylformylglycinamidine cyclo-ligase (342 aa).

This sequence belongs to the AIR synthase family.

The protein resides in the cytoplasm. The enzyme catalyses 2-formamido-N(1)-(5-O-phospho-beta-D-ribosyl)acetamidine + ATP = 5-amino-1-(5-phospho-beta-D-ribosyl)imidazole + ADP + phosphate + H(+). The protein operates within purine metabolism; IMP biosynthesis via de novo pathway; 5-amino-1-(5-phospho-D-ribosyl)imidazole from N(2)-formyl-N(1)-(5-phospho-D-ribosyl)glycinamide: step 2/2. This chain is Phosphoribosylformylglycinamidine cyclo-ligase, found in Staphylococcus aureus (strain bovine RF122 / ET3-1).